A 423-amino-acid chain; its full sequence is Probable WRKY transcription factor 58 (423 aa).

Disordered regions lie at residues 91–128, 142–171, and 215–284; these read SSAHTGFIQPRQQSQPQPQRPDTFPHHMPPSTSVAVHG, RNHYNNPGNNNNNRSYNVVNVDKPADDGYN, and IYKG…GVST. Low complexity-rich tracts occupy residues 99–111 and 144–162; these read QPRQQSQPQPQRP and HYNNPGNNNNNRSYNVVNV. Residues 161–225 constitute a DNA-binding region (WRKY 1); that stretch reads NVDKPADDGY…YKGQHDHERP (65 aa). The segment covering 259 to 271 has biased composition (acidic residues); sequence DDDDDDDEDDEDL. Residues 300-365 constitute a DNA-binding region (WRKY 2); sequence SEVDLLDDGY…YEGKHNHDVP (66 aa).

It is found in the nucleus. Functionally, transcription factor. Interacts specifically with the W box (5'-(T)TGAC[CT]-3'), a frequently occurring elicitor-responsive cis-acting element. In Arabidopsis thaliana (Mouse-ear cress), this protein is Probable WRKY transcription factor 58 (WRKY58).